Reading from the N-terminus, the 302-residue chain is MYFYKKYLHFFFVVSKFKFFLKMQVPFGCNMKGLGVLLGLFSLILAQQLPDLPRTQHPPKRELKYWCTYVPQCDFCWDCQNGICKNKIMETQLIDSNHSIVNCRVSRNSETQTCFYEISSKMPNHFSMSCSHPTPYIGNEIFMKKVGGDYMTLLTLKQYCLYFIISIAFAGCFVYAVRKNLRLNTTIKLLTLLSILVYLAQPVLNRPLSIFYTKQFLPRTYTPPTRELDYWCTYAKHCDFCWECRKGICKNKVLDDMPPFIIQNDYINKCSIARYFDRCMYFIEPKIPYIHYMNCSLPTYYG.

Residues 26–46 form a helical membrane-spanning segment; that stretch reads PFGCNMKGLGVLLGLFSLILA. N-linked (GlcNAc...) asparagine; by host glycosylation occurs at Asn97. Helical transmembrane passes span 154 to 174 and 183 to 203; these read LTLK…GCFV and LNTT…AQPV. N-linked (GlcNAc...) asparagine; by host glycosylation occurs at Asn294.

Belongs to the asfivirus MGF 110 family.

The protein localises to the host membrane. Its function is as follows. Plays a role in virus cell tropism, and may be required for efficient virus replication in macrophages. This is Protein MGF 110-11L from African swine fever virus (isolate Tick/South Africa/Pretoriuskop Pr4/1996) (ASFV).